We begin with the raw amino-acid sequence, 431 residues long: MIERYSREEMSNIWTDQNRYEAWLEVEILACEAWSKLGDIPAEDVKKIRENAKVDVARAQEIEQETRHDVVAFTRQVSETLGEERKWVHYGLTSTDVVDTALSYVIKQANEIIKKDLERFIDVLAQKAKDYKYTLMMGRTHGVHAEPTTFGVKMALWYTEMKRNLERFKQVRKEIEVGKMSGAVGTFANIPPEIEAYVCEHLGLDAAPVSTQTLQRDRHAYYVATLALISTSMEKFAVEIRNLQKTETREVEEAFAKGQKGSSAMPHKRNPIGSENITGIARVIRGYVTTAYENVPLWHERDISHSSAERIMLPDVTIALDYGLNRFTNIVERLTVFEDNMLANIDKTFGLIYSQRVLLALINKGLAREAAYDKVQPKAMESWETKTPFRTLIEEDATITDLLTKEDLDECFNPKHHLNQVDTIFQRAGLE.

Residues arginine 4–tyrosine 5, arginine 67–aspartate 69, and threonine 93–serine 94 each bind N(6)-(1,2-dicarboxyethyl)-AMP. Catalysis depends on histidine 141, which acts as the Proton donor/acceptor. Residue glutamine 212 participates in N(6)-(1,2-dicarboxyethyl)-AMP binding. The Proton donor/acceptor role is filled by serine 262. N(6)-(1,2-dicarboxyethyl)-AMP is bound by residues serine 263, lysine 268–asparagine 270, asparagine 276, and serine 307–isoleucine 311.

The protein belongs to the lyase 1 family. Adenylosuccinate lyase subfamily. As to quaternary structure, homodimer and homotetramer. Residues from neighboring subunits contribute catalytic and substrate-binding residues to each active site.

It catalyses the reaction N(6)-(1,2-dicarboxyethyl)-AMP = fumarate + AMP. The catalysed reaction is (2S)-2-[5-amino-1-(5-phospho-beta-D-ribosyl)imidazole-4-carboxamido]succinate = 5-amino-1-(5-phospho-beta-D-ribosyl)imidazole-4-carboxamide + fumarate. It functions in the pathway purine metabolism; AMP biosynthesis via de novo pathway; AMP from IMP: step 2/2. It participates in purine metabolism; IMP biosynthesis via de novo pathway; 5-amino-1-(5-phospho-D-ribosyl)imidazole-4-carboxamide from 5-amino-1-(5-phospho-D-ribosyl)imidazole-4-carboxylate: step 2/2. Catalyzes two reactions in de novo purine nucleotide biosynthesis. Catalyzes the breakdown of 5-aminoimidazole- (N-succinylocarboxamide) ribotide (SAICAR or 2-[5-amino-1-(5-phospho-beta-D-ribosyl)imidazole-4-carboxamido]succinate) to 5-aminoimidazole-4-carboxamide ribotide (AICAR or 5-amino-1-(5-phospho-beta-D-ribosyl)imidazole-4-carboxamide) and fumarate, and of adenylosuccinate (ADS or N(6)-(1,2-dicarboxyethyl)-AMP) to adenosine monophosphate (AMP) and fumarate. In Staphylococcus saprophyticus subsp. saprophyticus (strain ATCC 15305 / DSM 20229 / NCIMB 8711 / NCTC 7292 / S-41), this protein is Adenylosuccinate lyase (purB).